The sequence spans 473 residues: Probable ribonuclease FAU-1 (473 aa).

It belongs to the FAU-1 family.

Functionally, probable RNase involved in rRNA stability through maturation and/or degradation of precursor rRNAs. Binds to RNA in loop regions with AU-rich sequences. This is Probable ribonuclease FAU-1 from Hyperthermus butylicus (strain DSM 5456 / JCM 9403 / PLM1-5).